Here is a 79-residue protein sequence, read N- to C-terminus: Acyl carrier protein (79 aa).

The Carrier domain maps to 2-79 (ASKEEILAGL…QDAVDFIXGA (78 aa)). Ser-40 is modified (O-(pantetheine 4'-phosphoryl)serine).

This sequence belongs to the acyl carrier protein (ACP) family. In terms of processing, 4'-phosphopantetheine is transferred from CoA to a specific serine of apo-ACP by AcpS. This modification is essential for activity because fatty acids are bound in thioester linkage to the sulfhydryl of the prosthetic group.

It localises to the cytoplasm. It participates in lipid metabolism; fatty acid biosynthesis. Carrier of the growing fatty acid chain in fatty acid biosynthesis. The sequence is that of Acyl carrier protein from Myxococcus xanthus.